A 109-amino-acid polypeptide reads, in one-letter code: Ribonuclease P protein component (109 aa).

Belongs to the RnpA family. As to quaternary structure, consists of a catalytic RNA component (M1 or rnpB) and a protein subunit.

It catalyses the reaction Endonucleolytic cleavage of RNA, removing 5'-extranucleotides from tRNA precursor.. In terms of biological role, RNaseP catalyzes the removal of the 5'-leader sequence from pre-tRNA to produce the mature 5'-terminus. It can also cleave other RNA substrates such as 4.5S RNA. The protein component plays an auxiliary but essential role in vivo by binding to the 5'-leader sequence and broadening the substrate specificity of the ribozyme. In Mycoplasma capricolum subsp. capricolum (strain California kid / ATCC 27343 / NCTC 10154), this protein is Ribonuclease P protein component.